The chain runs to 428 residues: UPF0229 protein YeaH (428 aa).

Over residues 78 to 90 the composition is skewed to basic and acidic residues; that stretch reads GNDHFIQNDRIER. Positions 78-111 are disordered; sequence GNDHFIQNDRIERPQGGGGGGSGSGQGQASQDGE. Gly residues predominate over residues 92-103; it reads QGGGGGGSGSGQ.

It belongs to the UPF0229 family.

The chain is UPF0229 protein YeaH from Salmonella paratyphi C (strain RKS4594).